A 163-amino-acid polypeptide reads, in one-letter code: Protein NAG1 (163 aa).

Residues 76 to 96 (ACFSVRIVLPLSLTISISALM) form a helical membrane-spanning segment.

Its subcellular location is the membrane. In terms of biological role, involved in yeast cell wall biogenesis. This is Protein NAG1 (NAG1) from Saccharomyces cerevisiae (strain ATCC 204508 / S288c) (Baker's yeast).